A 304-amino-acid polypeptide reads, in one-letter code: Aspartate carbamoyltransferase catalytic subunit (304 aa).

Carbamoyl phosphate contacts are provided by Arg55 and Thr56. Lys84 serves as a coordination point for L-aspartate. Residues Arg105, His133, and Gln136 each coordinate carbamoyl phosphate. L-aspartate contacts are provided by Arg165 and Arg226. Carbamoyl phosphate-binding residues include Leu265 and Pro266.

Belongs to the aspartate/ornithine carbamoyltransferase superfamily. ATCase family. Heterooligomer of catalytic and regulatory chains.

The catalysed reaction is carbamoyl phosphate + L-aspartate = N-carbamoyl-L-aspartate + phosphate + H(+). Its pathway is pyrimidine metabolism; UMP biosynthesis via de novo pathway; (S)-dihydroorotate from bicarbonate: step 2/3. In terms of biological role, catalyzes the condensation of carbamoyl phosphate and aspartate to form carbamoyl aspartate and inorganic phosphate, the committed step in the de novo pyrimidine nucleotide biosynthesis pathway. This chain is Aspartate carbamoyltransferase catalytic subunit, found in Methanothrix thermoacetophila (strain DSM 6194 / JCM 14653 / NBRC 101360 / PT) (Methanosaeta thermophila).